A 297-amino-acid chain; its full sequence is Ribosomal protein L11 methyltransferase (297 aa).

Residues Thr150, Gly171, Asp193, and Asn233 each coordinate S-adenosyl-L-methionine.

Belongs to the methyltransferase superfamily. PrmA family.

The protein resides in the cytoplasm. The catalysed reaction is L-lysyl-[protein] + 3 S-adenosyl-L-methionine = N(6),N(6),N(6)-trimethyl-L-lysyl-[protein] + 3 S-adenosyl-L-homocysteine + 3 H(+). Functionally, methylates ribosomal protein L11. The chain is Ribosomal protein L11 methyltransferase from Laribacter hongkongensis (strain HLHK9).